The primary structure comprises 242 residues: NAD(P)H-quinone oxidoreductase subunit K (242 aa).

[4Fe-4S] cluster contacts are provided by C60, C61, C125, and C156.

Belongs to the complex I 20 kDa subunit family. NDH-1 can be composed of about 15 different subunits; different subcomplexes with different compositions have been identified which probably have different functions. [4Fe-4S] cluster serves as cofactor.

The protein resides in the cellular thylakoid membrane. The catalysed reaction is a plastoquinone + NADH + (n+1) H(+)(in) = a plastoquinol + NAD(+) + n H(+)(out). It carries out the reaction a plastoquinone + NADPH + (n+1) H(+)(in) = a plastoquinol + NADP(+) + n H(+)(out). Its function is as follows. NDH-1 shuttles electrons from an unknown electron donor, via FMN and iron-sulfur (Fe-S) centers, to quinones in the respiratory and/or the photosynthetic chain. The immediate electron acceptor for the enzyme in this species is believed to be plastoquinone. Couples the redox reaction to proton translocation, and thus conserves the redox energy in a proton gradient. Cyanobacterial NDH-1 also plays a role in inorganic carbon-concentration. This Prochlorococcus marinus (strain SARG / CCMP1375 / SS120) protein is NAD(P)H-quinone oxidoreductase subunit K.